The primary structure comprises 449 residues: 4-aminobutyrate aminotransferase (449 aa).

K294 carries the N6-(pyridoxal phosphate)lysine modification.

The protein belongs to the class-III pyridoxal-phosphate-dependent aminotransferase family. It depends on pyridoxal 5'-phosphate as a cofactor.

The catalysed reaction is 4-aminobutanoate + 2-oxoglutarate = succinate semialdehyde + L-glutamate. The enzyme catalyses (S)-3-amino-2-methylpropanoate + 2-oxoglutarate = 2-methyl-3-oxopropanoate + L-glutamate. The protein operates within amino-acid degradation; 4-aminobutanoate degradation. This chain is 4-aminobutyrate aminotransferase (gabT), found in Mycobacterium bovis (strain ATCC BAA-935 / AF2122/97).